A 381-amino-acid chain; its full sequence is E3 ubiquitin-protein ligase RNF133 (381 aa).

The PA domain maps to 65–167; the sequence is SSILKRVAGV…VKGMEILHLI (103 aa). A helical membrane pass occupies residues 186–208; the sequence is WLNHYFVSFMIVTTATLAYFTFY. Residues 256-297 form an RING-type; atypical zinc finger; it reads CVICFEAYKPNEIVRILTCKHFFHKNCIDPWILAHGTCPMCK. The segment at 340 to 381 is disordered; sequence LPPARTSSKVTHVQEHPTSVNVGSQPPEAEETGHPSFGQHDL. Polar residues predominate over residues 344 to 363; the sequence is RTSSKVTHVQEHPTSVNVGS.

As to quaternary structure, interacts with E3 ligase UBE2J1. In terms of processing, auto-ubiquitinated.

Its subcellular location is the endoplasmic reticulum membrane. The enzyme catalyses S-ubiquitinyl-[E2 ubiquitin-conjugating enzyme]-L-cysteine + [acceptor protein]-L-lysine = [E2 ubiquitin-conjugating enzyme]-L-cysteine + N(6)-ubiquitinyl-[acceptor protein]-L-lysine.. It functions in the pathway protein modification; protein ubiquitination. Has E3 ubiquitin-protein ligase activity. Plays a role in male fecundity through the interaction with the E2 ubituitin-protein ligase UBE2J1. The polypeptide is E3 ubiquitin-protein ligase RNF133 (Rnf133) (Rattus norvegicus (Rat)).